The following is a 771-amino-acid chain: Transcription factor TAS2 (771 aa).

Residues 33 to 53 are disordered; sequence RSRAESASGPQQPSRRQPQTS. The segment covering 42–51 has biased composition (low complexity); sequence PQQPSRRQPQ. A DNA-binding region (zn(2)-C6 fungal-type) is located at residues 54-80; that stretch reads CDLCRSRKIKCDRGTPCGNCRTRGLAC. Positions 125–150 are disordered; that stretch reads AVGGSGNAENGAHGDATPRVPLSGLE.

It is found in the nucleus. In terms of biological role, transcription factor; part of the gene cluster that mediates the biosynthesis of the toxin tenuazonic acid (TeA), an inhibitor of protein biosynthesis on ribosomes by suppressing the release of new protein. Directly regulates the expression of the hybrid PKS-NRPS synthetase TAS1 and the subsequent production of TeA. This chain is Transcription factor TAS2, found in Pyricularia oryzae (strain 70-15 / ATCC MYA-4617 / FGSC 8958) (Rice blast fungus).